The chain runs to 264 residues: 3-methyl-2-oxobutanoate hydroxymethyltransferase (264 aa).

Mg(2+) is bound by residues D45 and D84. 3-methyl-2-oxobutanoate contacts are provided by residues 45–46 (DS), D84, and K112. Residue E114 participates in Mg(2+) binding. Catalysis depends on E181, which acts as the Proton acceptor.

It belongs to the PanB family. As to quaternary structure, homodecamer; pentamer of dimers. Mg(2+) is required as a cofactor.

Its subcellular location is the cytoplasm. The enzyme catalyses 3-methyl-2-oxobutanoate + (6R)-5,10-methylene-5,6,7,8-tetrahydrofolate + H2O = 2-dehydropantoate + (6S)-5,6,7,8-tetrahydrofolate. It functions in the pathway cofactor biosynthesis; (R)-pantothenate biosynthesis; (R)-pantoate from 3-methyl-2-oxobutanoate: step 1/2. In terms of biological role, catalyzes the reversible reaction in which hydroxymethyl group from 5,10-methylenetetrahydrofolate is transferred onto alpha-ketoisovalerate to form ketopantoate. The polypeptide is 3-methyl-2-oxobutanoate hydroxymethyltransferase (Escherichia coli O7:K1 (strain IAI39 / ExPEC)).